We begin with the raw amino-acid sequence, 51 residues long: Insulin (51 aa).

3 disulfide bridges follow: Cys7/Cys37, Cys19/Cys50, and Cys36/Cys41.

The protein belongs to the insulin family. Heterodimer of a B chain and an A chain linked by two disulfide bonds.

The protein resides in the secreted. Insulin decreases blood glucose concentration. It increases cell permeability to monosaccharides, amino acids and fatty acids. It accelerates glycolysis, the pentose phosphate cycle, and glycogen synthesis in liver. This Ptyas dhumnades (Big-eyed ratsnake) protein is Insulin (INS).